Consider the following 218-residue polypeptide: Superoxide dismutase [Mn], mitochondrial (218 aa).

Mn(2+)-binding residues include H27, H84, D174, and H178.

This sequence belongs to the iron/manganese superoxide dismutase family. In terms of assembly, homotetramer. Mn(2+) serves as cofactor.

The protein resides in the mitochondrion matrix. The catalysed reaction is 2 superoxide + 2 H(+) = H2O2 + O2. Destroys superoxide anion radicals which are normally produced within the cells and which are toxic to biological systems. The protein is Superoxide dismutase [Mn], mitochondrial (SODA) of Chlamydomonas reinhardtii (Chlamydomonas smithii).